The sequence spans 513 residues: uncharacterized protein (513 aa).

Disordered regions lie at residues 72 to 113 and 155 to 262; these read GVVP…TGQF and IMGG…NPRF. The segment covering 82–106 has biased composition (low complexity); that stretch reads ANRTANPNTNSNPNPNATNAQPNPT. Composition is skewed to polar residues over residues 164 to 189 and 210 to 228; these read EANSEQARNANTETSNPPFASAQTQG and TPLNQPPSYAASTQPEFQQ. Residues 229–238 show a composition bias toward low complexity; it reads TTSPIFSSSS. Residues 239–248 show a composition bias toward pro residues; the sequence is TPPPPPPRPS. Polar residues predominate over residues 253 to 262; that stretch reads GESQNTNPRF. The RING-type; atypical zinc-finger motif lies at 396–437; sequence CTICMEMFKINDDVIQLPCKHYFHENCIKPWLRVNGTCAICR. A disordered region spans residues 439–513; sequence PVDPNSQQRN…DDFVDEEPLE (75 aa). Positions 442 to 493 are enriched in polar residues; the sequence is PNSQQRNNTSTDSANGHNPSNHANPSTSTTNDQGATLRNESFNAASQSNLSS.

This is an uncharacterized protein from Schizosaccharomyces pombe (strain 972 / ATCC 24843) (Fission yeast).